The following is a 1023-amino-acid chain: 1-phosphatidylinositol 4,5-bisphosphate phosphodiesterase beta-4 (1023 aa).

In terms of domain architecture, PI-PLC X-box spans 149–299; that stretch reads QEMDHPLAHY…LKRKILIKKQ (151 aa). Catalysis depends on residues His164 and His211. Positions 413 to 529 constitute a PI-PLC Y-box domain; it reads LSTMINYAQP…GYLLKPDFMR (117 aa). Residues 532–657 form the C2 domain; that stretch reads DRTFDPFSET…SLRNEGNKPL (126 aa). Disordered stretches follow at residues 711 to 742 and 930 to 958; these read ADVP…SELR and KISM…VREL. Polar residues-rich tracts occupy residues 729-742 and 933-942; these read AKAN…SELR and MENSKAISQD. The residue at position 734 (Thr734) is a Phosphothreonine. The span at 943 to 957 shows a compositional bias: basic and acidic residues; sequence KSIKNKAERERRVRE.

It depends on Ca(2+) as a cofactor. Post-translationally, the N-terminus is blocked. As to expression, preferentially expressed in the retina.

Its subcellular location is the cell membrane. It catalyses the reaction a 1,2-diacyl-sn-glycero-3-phospho-(1D-myo-inositol-4,5-bisphosphate) + H2O = 1D-myo-inositol 1,4,5-trisphosphate + a 1,2-diacyl-sn-glycerol + H(+). It carries out the reaction a 1,2-diacyl-sn-glycero-3-phospho-(1D-myo-inositol) + H2O = 1D-myo-inositol 1-phosphate + a 1,2-diacyl-sn-glycerol + H(+). Functionally, activated phosphatidylinositol-specific phospholipase C enzymes catalyze the production of the second messenger molecules diacylglycerol (DAG) and inositol 1,4,5-trisphosphate (IP3) involved in G-protein coupled receptor signaling pathways. PLCB4 is a direct effector of the endothelin receptor signaling pathway that plays an essential role in lower jaw and middle ear structures development. This chain is 1-phosphatidylinositol 4,5-bisphosphate phosphodiesterase beta-4 (PLCB4), found in Bos taurus (Bovine).